We begin with the raw amino-acid sequence, 471 residues long: 3-isopropylmalate dehydratase large subunit (471 aa).

3 residues coordinate [4Fe-4S] cluster: Cys-349, Cys-410, and Cys-413.

The protein belongs to the aconitase/IPM isomerase family. LeuC type 1 subfamily. As to quaternary structure, heterodimer of LeuC and LeuD. It depends on [4Fe-4S] cluster as a cofactor.

It carries out the reaction (2R,3S)-3-isopropylmalate = (2S)-2-isopropylmalate. Its pathway is amino-acid biosynthesis; L-leucine biosynthesis; L-leucine from 3-methyl-2-oxobutanoate: step 2/4. Functionally, catalyzes the isomerization between 2-isopropylmalate and 3-isopropylmalate, via the formation of 2-isopropylmaleate. This chain is 3-isopropylmalate dehydratase large subunit, found in Chromobacterium violaceum (strain ATCC 12472 / DSM 30191 / JCM 1249 / CCUG 213 / NBRC 12614 / NCIMB 9131 / NCTC 9757 / MK).